The sequence spans 291 residues: 4-hydroxy-tetrahydrodipicolinate synthase (291 aa).

Thr44 contacts pyruvate. Tyr132 serves as the catalytic Proton donor/acceptor. The Schiff-base intermediate with substrate role is filled by Lys160. Residue Ile202 coordinates pyruvate.

The protein belongs to the DapA family. Homotetramer; dimer of dimers.

The protein resides in the cytoplasm. It catalyses the reaction L-aspartate 4-semialdehyde + pyruvate = (2S,4S)-4-hydroxy-2,3,4,5-tetrahydrodipicolinate + H2O + H(+). The protein operates within amino-acid biosynthesis; L-lysine biosynthesis via DAP pathway; (S)-tetrahydrodipicolinate from L-aspartate: step 3/4. In terms of biological role, catalyzes the condensation of (S)-aspartate-beta-semialdehyde [(S)-ASA] and pyruvate to 4-hydroxy-tetrahydrodipicolinate (HTPA). This Rhodospirillum centenum (strain ATCC 51521 / SW) protein is 4-hydroxy-tetrahydrodipicolinate synthase.